The primary structure comprises 67 residues: uncharacterized protein (67 aa).

This is an uncharacterized protein from Swinepox virus (strain Kasza) (SWPV).